A 376-amino-acid polypeptide reads, in one-letter code: 23S rRNA (uracil(747)-C(5))-methyltransferase RlmC (376 aa).

[4Fe-4S] cluster is bound by residues Cys3, Cys11, Cys14, and Cys87. Gln212, Phe241, Glu262, and Asn307 together coordinate S-adenosyl-L-methionine. Catalysis depends on Cys334, which acts as the Nucleophile.

This sequence belongs to the class I-like SAM-binding methyltransferase superfamily. RNA M5U methyltransferase family. RlmC subfamily.

The enzyme catalyses uridine(747) in 23S rRNA + S-adenosyl-L-methionine = 5-methyluridine(747) in 23S rRNA + S-adenosyl-L-homocysteine + H(+). In terms of biological role, catalyzes the formation of 5-methyl-uridine at position 747 (m5U747) in 23S rRNA. The sequence is that of 23S rRNA (uracil(747)-C(5))-methyltransferase RlmC from Citrobacter koseri (strain ATCC BAA-895 / CDC 4225-83 / SGSC4696).